Consider the following 334-residue polypeptide: D-aspartate oxidase 2 (334 aa).

FAD-binding residues include D38, K39, S46, G310, and T315.

It belongs to the DAMOX/DASOX family. It depends on FAD as a cofactor. Expressed in the intestinal cells, pharyngeal muscles, and body wall muscles in adult hermaphrodites.

The protein resides in the cytoplasm. It catalyses the reaction D-aspartate + O2 + H2O = oxaloacetate + H2O2 + NH4(+). It carries out the reaction D-glutamate + O2 + H2O = H2O2 + 2-oxoglutarate + NH4(+). Inhibited by thiolactomycin. Selectively catalyzes the oxidative deamination of acidic amino acids. May play a role in the egg-laying events and early development of the worm, in addition to quality control of the germ cells. The protein is D-aspartate oxidase 2 (ddo-2) of Caenorhabditis elegans.